Reading from the N-terminus, the 325-residue chain is Polyamine aminopropyltransferase (325 aa).

The region spanning 11 to 248 (SSMAEDFAVE…TLWAMAMASD (238 aa)) is the PABS domain. Residue glutamine 44 coordinates S-methyl-5'-thioadenosine. Spermidine is bound by residues histidine 75 and aspartate 99. Residues glutamate 119 and 151 to 152 (DG) contribute to the S-methyl-5'-thioadenosine site. The active-site Proton acceptor is the aspartate 169. Proline 176 contacts S-methyl-5'-thioadenosine.

The protein belongs to the spermidine/spermine synthase family. As to quaternary structure, homodimer or homotetramer.

It localises to the cytoplasm. It carries out the reaction S-adenosyl 3-(methylsulfanyl)propylamine + putrescine = S-methyl-5'-thioadenosine + spermidine + H(+). Its pathway is amine and polyamine biosynthesis; spermidine biosynthesis; spermidine from putrescine: step 1/1. Functionally, catalyzes the irreversible transfer of a propylamine group from the amino donor S-adenosylmethioninamine (decarboxy-AdoMet) to putrescine (1,4-diaminobutane) to yield spermidine. This Nitrosomonas europaea (strain ATCC 19718 / CIP 103999 / KCTC 2705 / NBRC 14298) protein is Polyamine aminopropyltransferase.